Consider the following 57-residue polypeptide: Small ribosomal subunit protein eS31 (57 aa).

The Zn(2+) site is built by cysteine 29, cysteine 32, cysteine 47, and cysteine 50. The C4-type zinc finger occupies 29-50 (CSRCGKGTYMSEHKDRNTCGKC).

It belongs to the eukaryotic ribosomal protein eS31 family. Part of the 30S ribosomal subunit. Requires Zn(2+) as cofactor.

This chain is Small ribosomal subunit protein eS31, found in Nitrosopumilus maritimus (strain SCM1).